The sequence spans 353 residues: MAKAGVMTLSHVDRMNLRTWTMAIACCLLSFVNIVVFSVAAHFPGIGFPCYYPRIIDFDNMNLTMYNAIHHLTPQLFLDPVQLIVYVIFTELIFFCVLSYYIVCWVQIYFRSEHGTQVNQSTRDINFMGDSATCFTFVLTMDTFQIFLLSLSFRLPSMVAFSKCMYFMCLTAFVVTLVTHYESRERSAFALSKIHPKLQGTIRYRTAVVNLTQLILGFATMVLAMSLALGFGNSFFVKTAHVVFGAMVAFAIVACVYFSIIESVLSRYMKVQFGYHIGTILGVCGAMYPIIRYEALNASSYARDINIGITVLLLLCVAFSVIRTVRFLLRRNKRYRALALDNEEIRALRSDAE.

The Intravirion segment spans residues 1–27; sequence MAKAGVMTLSHVDRMNLRTWTMAIACC. A helical transmembrane segment spans residues 28-48; that stretch reads LLSFVNIVVFSVAAHFPGIGF. The Virion surface segment spans residues 49-82; that stretch reads PCYYPRIIDFDNMNLTMYNAIHHLTPQLFLDPVQ. The helical transmembrane segment at 83-103 threads the bilayer; it reads LIVYVIFTELIFFCVLSYYIV. At 104 to 132 the chain is on the intravirion side; that stretch reads CWVQIYFRSEHGTQVNQSTRDINFMGDSA. A helical transmembrane segment spans residues 133–153; the sequence is TCFTFVLTMDTFQIFLLSLSF. Topologically, residues 154 to 157 are virion surface; it reads RLPS. A helical membrane pass occupies residues 158-178; the sequence is MVAFSKCMYFMCLTAFVVTLV. At 179–210 the chain is on the intravirion side; sequence THYESRERSAFALSKIHPKLQGTIRYRTAVVN. A helical transmembrane segment spans residues 211 to 231; the sequence is LTQLILGFATMVLAMSLALGF. Over 232–240 the chain is Virion surface; it reads GNSFFVKTA. The helical transmembrane segment at 241-261 threads the bilayer; it reads HVVFGAMVAFAIVACVYFSII. The Intravirion portion of the chain corresponds to 262-270; that stretch reads ESVLSRYMK. A helical membrane pass occupies residues 271-291; that stretch reads VQFGYHIGTILGVCGAMYPII. The Virion surface portion of the chain corresponds to 292 to 304; sequence RYEALNASSYARD. A helical transmembrane segment spans residues 305-325; that stretch reads INIGITVLLLLCVAFSVIRTV. Topologically, residues 326 to 353 are intravirion; sequence RFLLRRNKRYRALALDNEEIRALRSDAE.

It belongs to the herpesviridae glycoprotein M family. Interacts (via N-terminus) with gN (via N-terminus). The gM-gN heterodimer forms the gCII complex.

The protein resides in the virion membrane. It is found in the host Golgi apparatus. Its subcellular location is the host trans-Golgi network. The protein localises to the host endosome membrane. It localises to the host nucleus inner membrane. In terms of biological role, envelope glycoprotein important for virion assembly and egress. Plays a role in the correct incorporation of gH-gL into virion membrane. Directs the glycoprotein N (gN) to the host trans-Golgi network. In Mus musculus (Mouse), this protein is Envelope glycoprotein M.